The primary structure comprises 433 residues: Enolase (433 aa).

Gln-167 provides a ligand contact to (2R)-2-phosphoglycerate. The active-site Proton donor is Glu-209. Asp-246, Glu-291, and Asp-318 together coordinate Mg(2+). Residues Lys-343, Arg-372, Ser-373, and Lys-394 each coordinate (2R)-2-phosphoglycerate. Lys-343 acts as the Proton acceptor in catalysis.

This sequence belongs to the enolase family. Component of the RNA degradosome, a multiprotein complex involved in RNA processing and mRNA degradation. Mg(2+) is required as a cofactor.

Its subcellular location is the cytoplasm. It localises to the secreted. It is found in the cell surface. It catalyses the reaction (2R)-2-phosphoglycerate = phosphoenolpyruvate + H2O. It participates in carbohydrate degradation; glycolysis; pyruvate from D-glyceraldehyde 3-phosphate: step 4/5. Functionally, catalyzes the reversible conversion of 2-phosphoglycerate (2-PG) into phosphoenolpyruvate (PEP). It is essential for the degradation of carbohydrates via glycolysis. The protein is Enolase of Marinomonas sp. (strain MWYL1).